Reading from the N-terminus, the 350-residue chain is MAATIWYEKDADLSVFDGKKVAILGYGSQGHAHALNLRDSGVDVVVGLRPTSKSVEFAKEQGLEVKPVGEAVAEADVVMILLPDQYQAAVYKKDVEPNLKPGAALAFAHGFNIHYGYIKPSEDHPVFMVAPKGPGHIVRREYAAGRGVPVVVAVEQDPDGKTWPLCLAYAKALGALRAGAIKTTFTEETETDLFGEQDVLMGGINHLCDLGFDVLTEAGYQPEIAYFEVFHELKMLVDLANEGGLNKARWSCSDTAQYGDYTSTVITEETKKRMQYQLKRIQDGSFAKEFMDDQAAGAPKFKKLQEEYSHPHLETVGPKLRAMFSWNNAEAKDKDETESFNGKIARTQVQ.

A KARI N-terminal Rossmann domain is found at 3–183 (ATIWYEKDAD…GALRAGAIKT (181 aa)). NADP(+) contacts are provided by residues 26–29 (YGSQ), arginine 49, serine 52, serine 54, and 84–87 (DQYQ). Residue histidine 109 is part of the active site. Position 135 (glycine 135) interacts with NADP(+). The 144-residue stretch at 184-327 (TFTEETETDL…PKLRAMFSWN (144 aa)) folds into the KARI C-terminal knotted domain. Positions 192, 196, 228, and 232 each coordinate Mg(2+). A substrate-binding site is contributed by serine 253. Residues 331–350 (AKDKDETESFNGKIARTQVQ) are disordered.

It belongs to the ketol-acid reductoisomerase family. Mg(2+) is required as a cofactor.

The catalysed reaction is (2R)-2,3-dihydroxy-3-methylbutanoate + NADP(+) = (2S)-2-acetolactate + NADPH + H(+). The enzyme catalyses (2R,3R)-2,3-dihydroxy-3-methylpentanoate + NADP(+) = (S)-2-ethyl-2-hydroxy-3-oxobutanoate + NADPH + H(+). It participates in amino-acid biosynthesis; L-isoleucine biosynthesis; L-isoleucine from 2-oxobutanoate: step 2/4. Its pathway is amino-acid biosynthesis; L-valine biosynthesis; L-valine from pyruvate: step 2/4. Involved in the biosynthesis of branched-chain amino acids (BCAA). Catalyzes an alkyl-migration followed by a ketol-acid reduction of (S)-2-acetolactate (S2AL) to yield (R)-2,3-dihydroxy-isovalerate. In the isomerase reaction, S2AL is rearranged via a Mg-dependent methyl migration to produce 3-hydroxy-3-methyl-2-ketobutyrate (HMKB). In the reductase reaction, this 2-ketoacid undergoes a metal-dependent reduction by NADPH to yield (R)-2,3-dihydroxy-isovalerate. In Bifidobacterium longum (strain NCC 2705), this protein is Ketol-acid reductoisomerase (NADP(+)) 2.